The sequence spans 716 residues: Fatty acid oxidation complex subunit alpha (716 aa).

Positions M1–A189 are enoyl-CoA hydratase/isomerase. D296 is a binding site for substrate. A 3-hydroxyacyl-CoA dehydrogenase region spans residues K311 to A716. NAD(+) contacts are provided by residues M324, D343, V400 to E402, K407, and S429. The active-site For 3-hydroxyacyl-CoA dehydrogenase activity is H450. N453 is a binding site for NAD(+). Substrate contacts are provided by N500 and Y660.

In the N-terminal section; belongs to the enoyl-CoA hydratase/isomerase family. The protein in the C-terminal section; belongs to the 3-hydroxyacyl-CoA dehydrogenase family. Heterotetramer of two alpha chains (FadB) and two beta chains (FadA).

It carries out the reaction a (3S)-3-hydroxyacyl-CoA + NAD(+) = a 3-oxoacyl-CoA + NADH + H(+). The catalysed reaction is a (3S)-3-hydroxyacyl-CoA = a (2E)-enoyl-CoA + H2O. It catalyses the reaction a 4-saturated-(3S)-3-hydroxyacyl-CoA = a (3E)-enoyl-CoA + H2O. The enzyme catalyses (3S)-3-hydroxybutanoyl-CoA = (3R)-3-hydroxybutanoyl-CoA. It carries out the reaction a (3Z)-enoyl-CoA = a 4-saturated (2E)-enoyl-CoA. The catalysed reaction is a (3E)-enoyl-CoA = a 4-saturated (2E)-enoyl-CoA. Its pathway is lipid metabolism; fatty acid beta-oxidation. Functionally, involved in the aerobic and anaerobic degradation of long-chain fatty acids via beta-oxidation cycle. Catalyzes the formation of 3-oxoacyl-CoA from enoyl-CoA via L-3-hydroxyacyl-CoA. It can also use D-3-hydroxyacyl-CoA and cis-3-enoyl-CoA as substrate. The protein is Fatty acid oxidation complex subunit alpha of Shewanella baltica (strain OS185).